We begin with the raw amino-acid sequence, 280 residues long: UDP-3-O-acyl-N-acetylglucosamine deacetylase (280 aa).

Zn(2+)-binding residues include histidine 79, histidine 237, and aspartate 241. Histidine 264 acts as the Proton donor in catalysis.

The protein belongs to the LpxC family. Zn(2+) serves as cofactor.

It carries out the reaction a UDP-3-O-[(3R)-3-hydroxyacyl]-N-acetyl-alpha-D-glucosamine + H2O = a UDP-3-O-[(3R)-3-hydroxyacyl]-alpha-D-glucosamine + acetate. Its pathway is glycolipid biosynthesis; lipid IV(A) biosynthesis; lipid IV(A) from (3R)-3-hydroxytetradecanoyl-[acyl-carrier-protein] and UDP-N-acetyl-alpha-D-glucosamine: step 2/6. Its function is as follows. Catalyzes the hydrolysis of UDP-3-O-myristoyl-N-acetylglucosamine to form UDP-3-O-myristoylglucosamine and acetate, the committed step in lipid A biosynthesis. The chain is UDP-3-O-acyl-N-acetylglucosamine deacetylase from Chlamydia abortus (strain DSM 27085 / S26/3) (Chlamydophila abortus).